Consider the following 33-residue polypeptide: U1-pseudomyrmecitoxin-Pt1 subunit LS1 (33 aa).

This sequence belongs to the myrmexin family. In terms of assembly, heterodimer composed of subunit LS1 and subunit SS1 (U1-PSDTX-Pt1b), heterodimer composed of subunit LS1 and SS2 (U1-PSDTX-Pt1b), and heterodimer composed of subunit LS1 and SS3; disulfide-linked. Expressed by the venom gland.

The protein resides in the secreted. Its function is as follows. This heterodimer may have anti-inflammatory properties, since the myrmexin complex (composed of 6 SS-LS heterodimers) inhibits carrageenin-induced edema in a dose-dependent manner (after subcutaneous injection into rats). In Pseudomyrmex triplarinus (Ant), this protein is U1-pseudomyrmecitoxin-Pt1 subunit LS1.